Consider the following 402-residue polypeptide: Argininosuccinate synthase (402 aa).

ATP contacts are provided by residues 11–19 (AYSGGLDTS) and Ala-39. The L-citrulline site is built by Tyr-90 and Ser-95. Gly-120 is a binding site for ATP. The L-aspartate site is built by Thr-122, Asn-126, and Asp-127. Asn-126 provides a ligand contact to L-citrulline. Residues Arg-130, Ser-179, Ser-188, Glu-264, and Tyr-276 each coordinate L-citrulline.

This sequence belongs to the argininosuccinate synthase family. Type 1 subfamily. As to quaternary structure, homotetramer.

Its subcellular location is the cytoplasm. The catalysed reaction is L-citrulline + L-aspartate + ATP = 2-(N(omega)-L-arginino)succinate + AMP + diphosphate + H(+). The protein operates within amino-acid biosynthesis; L-arginine biosynthesis; L-arginine from L-ornithine and carbamoyl phosphate: step 2/3. The sequence is that of Argininosuccinate synthase from Roseiflexus castenholzii (strain DSM 13941 / HLO8).